The primary structure comprises 412 residues: Propionate kinase (412 aa).

This sequence belongs to the acetokinase family. PduW subfamily.

It is found in the cytoplasm. It catalyses the reaction propanoate + ATP = propanoyl phosphate + ADP. Its pathway is polyol metabolism; 1,2-propanediol degradation. Its function is as follows. Works with phosphate acetyltransferase (pta) to capture exogenous propionate and regenerate propionyl-CoA during degradation of 1,2-propanediol (1,2-PD). The chain is Propionate kinase from Yersinia enterocolitica serotype O:8 / biotype 1B (strain NCTC 13174 / 8081).